A 261-amino-acid chain; its full sequence is Probable membrane transporter protein XF_0764 (261 aa).

8 helical membrane-spanning segments follow: residues 6–26, 29–49, 78–98, 99–119, 150–170, 175–195, 205–225, and 239–259; these read LIVT…LGGG, ILAT…IAIG, VIFA…GMLI, DGQR…LLML, AASG…LIFA, TINA…ITTL, WTIA…GTLL, and VFGL…WASL.

It belongs to the 4-toluene sulfonate uptake permease (TSUP) (TC 2.A.102) family.

It is found in the cell membrane. The chain is Probable membrane transporter protein XF_0764 from Xylella fastidiosa (strain 9a5c).